Here is a 437-residue protein sequence, read N- to C-terminus: Major royal jelly protein 6 (437 aa).

The first 20 residues, 1–20 (MTNWLLLIVCLSIACQDVTS), serve as a signal peptide directing secretion. 5 N-linked (GlcNAc...) asparagine glycosylation sites follow: Asn78, Asn164, Asn181, Asn201, and Asn324.

This sequence belongs to the major royal jelly protein family. Found in and secreted from the hypopharyngeal glands of the worker honey bee (at protein level); expression peaks at 20 days post eclosion. Expressed in the spermatheca of adult queen bees (at protein level); Expression levels are higher in mated queens than in virgin queens. Expressed at low level in the brains of adult worker bees. Protein abundance does not seem to correlate with transcript abundance.

It localises to the secreted. Functionally, component of royal jelly, a substance produced in the hypopharyngeal gland containing proteins, free amino acids, fatty acids, sugars and other nutrients, which is fed to developing larvae by worker nurse bees. All larvae are fed some royal jelly (also known as worker jelly) early in their development but it forms the principal source of nutrition for larvae destined to become queen bees. Produced in the spermatheca of adult queen bees, along with other major royal jelly proteins, where it may act as a nutrient supply for sperm stored by mated queens, or be involved in energy metabolism. This Apis mellifera (Honeybee) protein is Major royal jelly protein 6.